Here is a 498-residue protein sequence, read N- to C-terminus: Aspartyl/glutamyl-tRNA(Asn/Gln) amidotransferase subunit B (498 aa).

This sequence belongs to the GatB/GatE family. GatB subfamily. Heterotrimer of A, B and C subunits.

It carries out the reaction L-glutamyl-tRNA(Gln) + L-glutamine + ATP + H2O = L-glutaminyl-tRNA(Gln) + L-glutamate + ADP + phosphate + H(+). The catalysed reaction is L-aspartyl-tRNA(Asn) + L-glutamine + ATP + H2O = L-asparaginyl-tRNA(Asn) + L-glutamate + ADP + phosphate + 2 H(+). Allows the formation of correctly charged Asn-tRNA(Asn) or Gln-tRNA(Gln) through the transamidation of misacylated Asp-tRNA(Asn) or Glu-tRNA(Gln) in organisms which lack either or both of asparaginyl-tRNA or glutaminyl-tRNA synthetases. The reaction takes place in the presence of glutamine and ATP through an activated phospho-Asp-tRNA(Asn) or phospho-Glu-tRNA(Gln). This Caulobacter vibrioides (strain ATCC 19089 / CIP 103742 / CB 15) (Caulobacter crescentus) protein is Aspartyl/glutamyl-tRNA(Asn/Gln) amidotransferase subunit B.